A 222-amino-acid polypeptide reads, in one-letter code: Superoxide dismutase [Mn], mitochondrial (222 aa).

Residues 1–24 constitute a mitochondrion transit peptide; it reads MLSRAVCGTSRQLAPVLGYLGSRQ. His-50 provides a ligand contact to Mn(2+). Tyr-58 is subject to 3'-nitrotyrosine. N6-acetyllysine; alternate is present on residues Lys-68 and Lys-75. 2 positions are modified to N6-succinyllysine; alternate: Lys-68 and Lys-75. A Mn(2+)-binding site is contributed by His-98. N6-acetyllysine is present on Lys-114. Residues Lys-122 and Lys-130 each carry the N6-acetyllysine; alternate modification. An N6-succinyllysine; alternate mark is found at Lys-122 and Lys-130. Positions 183 and 187 each coordinate Mn(2+). Lys-202 carries the post-translational modification N6-acetyllysine.

It belongs to the iron/manganese superoxide dismutase family. Homotetramer. Mn(2+) is required as a cofactor. Nitrated under oxidative stress. Nitration coupled with oxidation inhibits the catalytic activity. Post-translationally, acetylation at Lys-122 decreases enzymatic activity. Deacetylated by SIRT3 upon exposure to ionizing radiations or after long fasting. In terms of processing, polyubiquitinated; leading to proteasomal degradation. Deubiquitinated by USP36 which increases protein stability.

It localises to the mitochondrion matrix. The enzyme catalyses 2 superoxide + 2 H(+) = H2O2 + O2. Functionally, destroys superoxide anion radicals which are normally produced within the cells and which are toxic to biological systems. The protein is Superoxide dismutase [Mn], mitochondrial (SOD2) of Homo sapiens (Human).